Consider the following 315-residue polypeptide: Ribosomal RNA small subunit methyltransferase H (315 aa).

Residues 33–35, Asp-52, Phe-84, Asp-106, and Gln-113 contribute to the S-adenosyl-L-methionine site; that span reads GGH.

Belongs to the methyltransferase superfamily. RsmH family.

Its subcellular location is the cytoplasm. The catalysed reaction is cytidine(1402) in 16S rRNA + S-adenosyl-L-methionine = N(4)-methylcytidine(1402) in 16S rRNA + S-adenosyl-L-homocysteine + H(+). In terms of biological role, specifically methylates the N4 position of cytidine in position 1402 (C1402) of 16S rRNA. This Lactobacillus acidophilus (strain ATCC 700396 / NCK56 / N2 / NCFM) protein is Ribosomal RNA small subunit methyltransferase H.